The following is a 956-amino-acid chain: MTQKLQKIVLPPVYGPADFEARVYACWEQRQAFSPRARGSGTSDSEGCDGHSRQIEGGARTFVIAIPPPNITGVLHMGHCLNTVLQDIVIRYQRMAGACTLWIPGTDHAGIATQHVVERALRKEGIHKREVTREQFVARTQQIKDSHQDTIRMQLRKMGASCDWTCERFTLDAGMSASVREAFVTLYERGLLYRSMYLVNWCPRCGTALSDDEVFHQEKDGALYYVRYPLLPRTEEEGNGVPPPLGTAQVGETIIIATTRPETILADVAVAVHPDDARYQSLIGRKVCVPMVNRIVPIIADSYVAQDFGTGMVKITPAHDPNDWDIGTRHSLEAINMLNPDGSLNDQVPAAYRGLSCAQARIQIVADLQAHGLLSREERIVHSVGVCYRCEAVIEPYLSLQWFVKMKPLASQALAAWKRADVQFHPKKWENTYVRWLEHIRDWCISRQLWWGHRIPVWYCAQCAQQTVSRVDVQRCAHCGSADITQDPDVLDTWFSSWLWPFSTLGWPQETQKLRAFYPTSAVITAYDIIFFWVARMIMAGLEFTQTVPFRDVYLHGLVRDKQGRKMSKSLNNGVDPLHIIRTYGADALRFTLAFMCAQGQDVLIEMDSFKMGSRFANKVWNASRYILGNLEGRRVYAIAHVSLTELDRWIFHTFNETVQQVRTALEAYRFNDAAQAVYEFFWNSFCDWYVEASKCSFQKPDEQEKDRAASVLCTLLEETLRLLHPFLPFVTEEIYRSLSPSVHDTTQAIPSGAHALLMCAPYPVYVPSRVDARACAHIGAVQEIVRAVRTLRAACGIDPQKAVSVRLRPSSPAQDANAAAQVSCVHDPGAVARTYEELICVLAGISSLVYLESDAPKPQVAVATAGTGFELFLVTTEGIDRTMLCARLQKAWQKARQKVQQVERKLADAQFCTHAPEEVVTAERKKLAEARATCHTLAGYLADMNGKPGPLSDSD.

Positions 69–79 (PNITGVLHMGH) match the 'HIGH' region motif. Residues 566-570 (KMSKS) carry the 'KMSKS' region motif. An ATP-binding site is contributed by Lys-569. Positions 885–911 (LCARLQKAWQKARQKVQQVERKLADAQ) form a coiled coil.

This sequence belongs to the class-I aminoacyl-tRNA synthetase family. ValS type 1 subfamily. As to quaternary structure, monomer.

It localises to the cytoplasm. It carries out the reaction tRNA(Val) + L-valine + ATP = L-valyl-tRNA(Val) + AMP + diphosphate. In terms of biological role, catalyzes the attachment of valine to tRNA(Val). As ValRS can inadvertently accommodate and process structurally similar amino acids such as threonine, to avoid such errors, it has a 'posttransfer' editing activity that hydrolyzes mischarged Thr-tRNA(Val) in a tRNA-dependent manner. This Treponema pallidum (strain Nichols) protein is Valine--tRNA ligase.